A 127-amino-acid polypeptide reads, in one-letter code: Riboflavin kinase (127 aa).

10–15 (GLGEGR) lines the CDP pocket. Mg(2+) is bound by residues T39 and N41. The FMN site is built by T96 and E104. Residue 109-112 (VHLR) participates in CDP binding.

This sequence belongs to the archaeal riboflavin kinase family. It depends on Mg(2+) as a cofactor.

The enzyme catalyses riboflavin + CTP = CDP + FMN + H(+). The protein operates within cofactor biosynthesis; FMN biosynthesis; FMN from riboflavin (CTP route): step 1/1. Functionally, catalyzes the CTP-dependent phosphorylation of riboflavin (vitamin B2) to form flavin mononucleotide (FMN). The protein is Riboflavin kinase of Methanococcus maripaludis (strain C7 / ATCC BAA-1331).